Here is a 1675-residue protein sequence, read N- to C-terminus: Clathrin heavy chain 1 (1675 aa).

N-acetylalanine is present on Ala-2. A globular terminal domain region spans residues 2-479; sequence AQILPIRFQE…VDPTLALSVY (478 aa). 7 WD40-like repeat regions span residues 24–67, 68–107, 108–149, 150–195, 196–257, 258–301, and 302–330; these read NIGF…RPIS, ADSA…MTDD, VTFW…SSLA, GCQI…QPIE, GHAA…PEAQ, NDFP…ISGE, and TIFV…VCVE. Residue Ser-67 is modified to Phosphoserine. Phosphothreonine is present on Thr-105. Tyr-184 bears the Phosphotyrosine mark. The residue at position 394 (Thr-394) is a Phosphothreonine. The binding site for the uncoating ATPase, involved in lattice disassembly stretch occupies residues 449-465; the sequence is EKWLKEDKLECSEELGD. A flexible linker region spans residues 480–523; sequence LRANVPNKVIQCFAETGQVQKIVLYAKKVGYTPDWIFLLRNVMR. The segment at 524-634 is distal segment; it reads ISPDQGQQFA…RALEHFTDLY (111 aa). Positions 524–1675 are heavy chain arm; that stretch reads ISPDQGQQFA…QPQPGFGYSM (1152 aa). CHCR repeat units lie at residues 537–683, 686–828, 833–972, 979–1124, 1128–1269, 1274–1420, and 1423–1566; these read VQDE…QIWV, ASKY…SEDV, ILVV…PLID, LSET…VKEA, YIKA…FRLA, LHIV…LLLN, and LMVL…RECF. Tyr-634 carries the post-translational modification Phosphotyrosine. Residues 639 to 1675 form a proximal segment region; the sequence is AVVHTHLLNP…QPQPGFGYSM (1037 aa). Lys-737 carries the post-translational modification N6-succinyllysine. Lys-856 is subject to N6-acetyllysine. At Tyr-899 the chain carries Phosphotyrosine. Ser-1167 carries the post-translational modification Phosphoserine. Tyr-1206 is modified (phosphotyrosine). The tract at residues 1213 to 1522 is involved in binding clathrin light chain; sequence AAKLLYNNVS…YLFKGNNRWK (310 aa). Residue Ser-1229 is modified to Phosphoserine. Lys-1441 is subject to N6-acetyllysine; alternate. Lys-1441 is subject to N6-succinyllysine; alternate. 2 positions are modified to phosphotyrosine: Tyr-1477 and Tyr-1487. A Phosphoserine modification is found at Ser-1494. Lys-1501 carries the post-translational modification N6-acetyllysine. The segment at 1550–1675 is trimerization; the sequence is AEELLQWFLQ…QPQPGFGYSM (126 aa).

This sequence belongs to the clathrin heavy chain family. In terms of assembly, clathrin triskelions, composed of 3 heavy chains and 3 light chains, are the basic subunits of the clathrin coat. In the presence of light chains, hub assembly is influenced by both the pH and the concentration of calcium. Interacts with HIP1. Interacts with DENND1A, DENND1B and DENND1C. Interacts with OCRL. Interacts with ERBB2. Interacts with FKBP6. Interacts with CKAP5 and TACC3 forming the TACC3/ch-TOG/clathrin complex located at spindle inter-microtubules bridges; the complex implicates clathrin triskelions; TACC3 and CLTC are proposed to form a composite microtubule interaction surface. Interacts with ATG16L1 (via N-terminus). Interacts with RFTN1; the interaction occurs in response to pathogens. Interacts with USP2 isoform 2. Interacts with TMEM106B (via N-terminus). Interacts with DNAJC6; this interaction produces a local change in heavy-chain contacts, creating a detectable global distortion of the clathrin coat and leads to the recruitment of HSPA8.

It is found in the cytoplasmic vesicle membrane. Its subcellular location is the membrane. It localises to the coated pit. The protein resides in the melanosome. The protein localises to the cytoplasm. It is found in the cytoskeleton. Its subcellular location is the spindle. Functionally, clathrin is the major protein of the polyhedral coat of coated pits and vesicles. Two different adapter protein complexes link the clathrin lattice either to the plasma membrane or to the trans-Golgi network. Acts as a component of the TACC3/ch-TOG/clathrin complex proposed to contribute to stabilization of kinetochore fibers of the mitotic spindle by acting as inter-microtubule bridge. The TACC3/ch-TOG/clathrin complex is required for the maintenance of kinetochore fiber tension. Plays a role in early autophagosome formation. Interaction with DNAJC6 mediates the recruitment of HSPA8 to the clathrin lattice and creates local destabilization of the lattice promoting uncoating. The protein is Clathrin heavy chain 1 of Rattus norvegicus (Rat).